Consider the following 1202-residue polypeptide: DNA-directed RNA polymerase subunit beta (1202 aa).

The protein belongs to the RNA polymerase beta chain family. As to quaternary structure, the RNAP catalytic core consists of 2 alpha, 1 beta, 1 beta' and 1 omega subunit. When a sigma factor is associated with the core the holoenzyme is formed, which can initiate transcription.

It catalyses the reaction RNA(n) + a ribonucleoside 5'-triphosphate = RNA(n+1) + diphosphate. DNA-dependent RNA polymerase catalyzes the transcription of DNA into RNA using the four ribonucleoside triphosphates as substrates. The sequence is that of DNA-directed RNA polymerase subunit beta from Mycoplasmopsis synoviae (strain 53) (Mycoplasma synoviae).